Reading from the N-terminus, the 547-residue chain is MAAKHVVFGAEARERMLRGVDTLANAVKVTLGPKGRNVVIEKSFGAPRSTKDGVTVAKEIELEDKFENMGAQMLREVASKANDTAGDGTTTATVLAQAIVREGMKRVAAGMNPMDLKRGISKAVAEVVSDLAHHSKKVKTNEEIAQVGTISANGETEIGQMIAEAMAKVGNEGVITVEEAKALETELDVVEGMQFDRGYISPYFITNPDKMIVELEDVLILLHESKLSSLQPLLPILESVVQSQKPLLIIAEDVDGEALATLVVNKLRGGLKIAAVKAPGFGDRRKAMLQDLAVLTGGQVISEDLGIKLENVGMEMLGKAKRVSIDKDNTTIVDGGGKKKEIEARVSQIRKQIDDTSSDYDREKLQERLAKLAGGVAVIKVGGATEVEVKERKDRVDDALNATRAAVEEGIVPGGGVALLRSSKNIDVVGLNDDEKAGIDIVRKALEAPIRQIAENAGVEGSVVVNTILNNKSRSYGFNAQTEEYGDLVAMGVIDPVKVVRSALQNAASIASLLITTEAGIAEAPKKESAGGGGMPGGMGGMGGMDF.

ATP contacts are provided by residues 30-33 (TLGP), Lys51, 87-91 (DGTTT), Gly415, and Asp495. A disordered region spans residues 526–547 (KKESAGGGGMPGGMGGMGGMDF). The segment covering 530-547 (AGGGGMPGGMGGMGGMDF) has biased composition (gly residues).

It belongs to the chaperonin (HSP60) family. In terms of assembly, forms a cylinder of 14 subunits composed of two heptameric rings stacked back-to-back. Interacts with the co-chaperonin GroES.

It localises to the cytoplasm. It carries out the reaction ATP + H2O + a folded polypeptide = ADP + phosphate + an unfolded polypeptide.. Its function is as follows. Together with its co-chaperonin GroES, plays an essential role in assisting protein folding. The GroEL-GroES system forms a nano-cage that allows encapsulation of the non-native substrate proteins and provides a physical environment optimized to promote and accelerate protein folding. The sequence is that of Chaperonin GroEL from Hyphomonas neptunium (strain ATCC 15444).